Reading from the N-terminus, the 1201-residue chain is Potassium/sodium hyperpolarization-activated cyclic nucleotide-gated channel 4 (1201 aa).

Residues 1 to 263 (MDKLPPSMRK…IIHPYSDFRF (263 aa)) are Cytoplasmic-facing. The segment at 24–183 (WIMDEEEDGE…PASASCEQPS (160 aa)) is disordered. Acidic residues predominate over residues 26–36 (MDEEEDGEEEG). Over residues 105–118 (SRGGGSGGAGGGSS) the composition is skewed to gly residues. Over residues 121–132 (HLHDSAEERRLI) the composition is skewed to basic and acidic residues. Position 139 is a phosphoserine (Ser139). Positions 164–174 (ASPPPQQPPQP) are enriched in pro residues. An involved in subunit assembly region spans residues 209–260 (GQSGFMQRQFGAMLQPGVNKFSLRMFGSQKAVEREQERVKSAGFWIIHPYSD). The chain crosses the membrane as a helical span at residues 264–286 (YWDLTMLLLMVGNLIIIPVGITF). Residues 287-293 (FKDENTT) lie on the Extracellular side of the membrane. A helical membrane pass occupies residues 294–314 (PWIVFNVVSDTFFLIDLVLNF). Topologically, residues 315–336 (RTGIVVEDNTEIILDPQRIKMK) are cytoplasmic. Residues 337 to 359 (YLKSWFVVDFISSIPVDYIFLIV) traverse the membrane as a helical segment. At 360 to 378 (ETRIDSEVYKTARALRIVR) the chain is on the extracellular side. Residues 379 to 399 (FTKILSLLRLLRLSRLIRYIH) traverse the membrane as a helical; Voltage-sensor segment. The Cytoplasmic portion of the chain corresponds to 400–413 (QWEEIFHMTYDLAS). A helical transmembrane segment spans residues 414 to 436 (AVVRIVNLIGMMLLLCHWDGCLQ). Over 437–464 (FLVPMLQDFPHDCWVSINGMVNNSWGKQ) the chain is Extracellular. The N-linked (GlcNAc...) asparagine glycan is linked to Asn458. The pore-forming intramembrane region spans 465–486 (YSYALFKAMSHMLCIGYGRQAP). Over 487 to 491 (VGMSD) the chain is Extracellular. Residues 492–517 (VWLTMLSMIVGATCYAMFIGHATALI) form a helical membrane-spanning segment. The Cytoplasmic segment spans residues 518 to 1201 (QSLDSSRRQY…PVRSKLPSNL (684 aa)). 3',5'-cyclic GMP-binding residues include Tyr559, Lys562, Phe564, and Glu566. Residues Gly659, Glu660, Cys662, Arg669, Thr670, Val673, and Arg710 each coordinate 3',5'-cyclic AMP. Disordered regions lie at residues 804-902 (AIFR…TAAA) and 914-1201 (ALGG…PSNL). 2 stretches are compositionally biased toward low complexity: residues 831–856 (SLIP…SSSS) and 866–880 (SAPP…SSSS). Over residues 881–894 (SPPPGACGSPPAPT) the composition is skewed to pro residues. 2 stretches are compositionally biased toward low complexity: residues 915–939 (LGGS…SPQA) and 967–995 (RSPS…SSTP). Positions 1029–1042 (GHSPGPPRTFPSAP) are enriched in pro residues. A compositionally biased stretch (low complexity) spans 1045–1056 (ASGSHGSLLLPP). Ser1105 and Ser1108 each carry phosphoserine. Positions 1122–1134 (AGGGSGSSGGLGP) are enriched in gly residues.

The protein belongs to the potassium channel HCN family. Homotetramer. The potassium channel is composed of a homo- or heterotetrameric complex of pore-forming subunits. Interacts with PEX5L with a 4:4 HCN4:PEX5L stoichiometry; reduces the effects of cAMP on the voltage-dependence and rate of activation. Interacts with IRAG1; regulates HCN4 channel activity. Interacts with IRAG2; regulates HCN4 channel activity. In terms of processing, S-palmitoylated. In terms of tissue distribution, detected in a subset of elongated cells in taste buds.

It is found in the cell membrane. The catalysed reaction is K(+)(in) = K(+)(out). The enzyme catalyses Na(+)(in) = Na(+)(out). Activated by cAMP, and to a lesser extent by cGMP and cCMP. cAMP binding causes a conformation change that leads to the assembly of an active tetramer and channel opening. Binding of cAMP removes a tonic inhibition conferred by cyclic nucleotide-binding domain (CNBD) on channel opening. Cyclic dinucleotides can modulate HCN4 channel; cyclic dinucleotides acting as potent antagonists of cAMP. Inhibited by extracellular Cs(+) ions. Auxiliary subunits can also regulate HCN4 channel. IRAG1 causes a gain-of-function by shifting HCN4 activation to more depolarized membrane potentials in the absence of cAMP. In contrast, IRAG2 causes a loss-of-function by inhibiting cAMP-dependent potentiation of HCN4 activation. Hyperpolarization-activated ion channel that are permeable to Na(+) and K(+) ions with very slow activation and inactivation. Exhibits higher selectivity for K(+) over Na(+) ions. Contributes to the native pacemaker currents in heart (If) that regulate the rhythm of heart beat. Contributes to the native pacemaker currents in neurons (Ih). May mediate responses to sour stimuli. In Mus musculus (Mouse), this protein is Potassium/sodium hyperpolarization-activated cyclic nucleotide-gated channel 4 (Hcn4).